Here is a 172-residue protein sequence, read N- to C-terminus: Small ribosomal subunit protein bS6 (172 aa).

Residues Leu100–Asp172 form a disordered region. Over residues Lys107–Asp172 the composition is skewed to basic and acidic residues.

This sequence belongs to the bacterial ribosomal protein bS6 family.

Its function is as follows. Binds together with bS18 to 16S ribosomal RNA. This is Small ribosomal subunit protein bS6 from Prochlorococcus marinus (strain MIT 9211).